The primary structure comprises 546 residues: Probable protein kinase UbiB (546 aa).

Residues 124–502 (DFEIKPLASA…HVRQGQSRYF (379 aa)) form the Protein kinase domain. Residues 130 to 138 (LASASIAQV) and Lys-153 each bind ATP. Residue Asp-288 is the Proton acceptor of the active site. 2 helical membrane-spanning segments follow: residues 501-521 (YFLGIGATLVLSGTFLLVSRP) and 522-542 (EWGLMPGWLMAGGLIAWFVGW).

Belongs to the ABC1 family. UbiB subfamily.

The protein resides in the cell inner membrane. Its pathway is cofactor biosynthesis; ubiquinone biosynthesis [regulation]. Functionally, is probably a protein kinase regulator of UbiI activity which is involved in aerobic coenzyme Q (ubiquinone) biosynthesis. The sequence is that of Probable protein kinase UbiB from Shigella boydii serotype 18 (strain CDC 3083-94 / BS512).